The following is a 193-amino-acid chain: uncharacterized protein (193 aa).

This is an uncharacterized protein from Haemophilus influenzae (strain ATCC 51907 / DSM 11121 / KW20 / Rd).